A 196-amino-acid polypeptide reads, in one-letter code: NADH-quinone oxidoreductase subunit C (196 aa).

The protein belongs to the complex I 30 kDa subunit family. In terms of assembly, NDH-1 is composed of 14 different subunits. Subunits NuoB, C, D, E, F, and G constitute the peripheral sector of the complex.

Its subcellular location is the cell inner membrane. The enzyme catalyses a quinone + NADH + 5 H(+)(in) = a quinol + NAD(+) + 4 H(+)(out). NDH-1 shuttles electrons from NADH, via FMN and iron-sulfur (Fe-S) centers, to quinones in the respiratory chain. The immediate electron acceptor for the enzyme in this species is believed to be ubiquinone. Couples the redox reaction to proton translocation (for every two electrons transferred, four hydrogen ions are translocated across the cytoplasmic membrane), and thus conserves the redox energy in a proton gradient. This chain is NADH-quinone oxidoreductase subunit C, found in Rickettsia bellii (strain RML369-C).